The following is a 547-amino-acid chain: MNKLIRRAVTIFAVTSVASLFASGVLETSMAEFISTNVISLADTKAKDNTSHKSKKARKNHSKETPVNRKKVAPVHESKATGPKQDSCFGRMYTVKVNDDRNVEITQAVPKYATVGSPYPVEITATGKRDCVDVIITQQLPCEAEFVRSDPATTPTADGKLVWKIDRLGQGEKSKITVWVKPLKEGCCFTAATVCACPEIRSVTKCGQPAICVKQEGPENACLRCPVVYKINVVNQGTATARNVVVENPVPDSYAHSSGQRVLTFTLGDMQPGEHRTITVEFCPLKRGRATNIAMVSYCGGHKNTASVTTVINEPCVQVSIAGADWSYVCKPVEYVISVSNPGDLVLRDVVVKDTLSPGVTVLEAAGAQISCNKVVWTVKELNPGESLQYKVLVRAQTPGQFTNNVVVKSCSDCGTCTSCAEATTYWKGVAATHMCVVDTCDPVCVGENTVYRICVTNRGSAEDTNVSLMLKFSKELQPVSFSGPTKGTITGNTVVFDSLPRLGSKETVEFSVTLKAVSAGDARGEAILSSDTLTVPVSDTENTHIY.

Positions 1 to 22 are cleaved as a signal peptide; that stretch reads MNKLIRRAVTIFAVTSVASLFA. The disordered stretch occupies residues 45–84; that stretch reads KAKDNTSHKSKKARKNHSKETPVNRKKVAPVHESKATGPK. Residues 52–61 show a composition bias toward basic residues; sequence HKSKKARKNH.

Part of a disulfide cross-linked outer membrane complex (COMC) composed of the major outer membrane porin (MOMP), the small cysteine-rich protein (OmcA) and the large cysteine-rich periplasmic protein (OmcB).

The protein resides in the periplasm. Its function is as follows. In elementary bodies (EBs, the infectious stage, which is able to survive outside the host cell) provides the structural integrity of the outer envelope through disulfide cross-links with the small cysteine-rich protein and the major outer membrane protein. It has been described in publications as the Sarkosyl-insoluble COMC (Chlamydia outer membrane complex), and serves as the functional equivalent of peptidoglycan. This Chlamydia trachomatis serovar L2 (strain ATCC VR-902B / DSM 19102 / 434/Bu) protein is Large cysteine-rich periplasmic protein OmcB (omcB).